Here is a 63-residue protein sequence, read N- to C-terminus: MANPKAKMSKSRRDKRRAQFNARTKAAVTVVCPNCGEPTLPHRACRHCGHYKGRQVTGKVVVA.

Residues 1–20 form a disordered region; it reads MANPKAKMSKSRRDKRRAQF. The segment covering 7-18 has biased composition (basic residues); that stretch reads KMSKSRRDKRRA.

This sequence belongs to the bacterial ribosomal protein bL32 family.

The sequence is that of Large ribosomal subunit protein bL32 from Chlorobaculum parvum (strain DSM 263 / NCIMB 8327) (Chlorobium vibrioforme subsp. thiosulfatophilum).